A 214-amino-acid chain; its full sequence is Probable transaldolase (214 aa).

The active-site Schiff-base intermediate with substrate is lysine 83.

It belongs to the transaldolase family. Type 3B subfamily.

The protein localises to the cytoplasm. The catalysed reaction is D-sedoheptulose 7-phosphate + D-glyceraldehyde 3-phosphate = D-erythrose 4-phosphate + beta-D-fructose 6-phosphate. It functions in the pathway carbohydrate degradation; pentose phosphate pathway; D-glyceraldehyde 3-phosphate and beta-D-fructose 6-phosphate from D-ribose 5-phosphate and D-xylulose 5-phosphate (non-oxidative stage): step 2/3. Functionally, transaldolase is important for the balance of metabolites in the pentose-phosphate pathway. In Alkaliphilus metalliredigens (strain QYMF), this protein is Probable transaldolase.